Here is a 154-residue protein sequence, read N- to C-terminus: Large ribosomal subunit protein uL30 (154 aa).

This sequence belongs to the universal ribosomal protein uL30 family. Part of the 50S ribosomal subunit.

The chain is Large ribosomal subunit protein uL30 from Methanococcus maripaludis (strain C5 / ATCC BAA-1333).